We begin with the raw amino-acid sequence, 1019 residues long: Probable inorganic carbon transporter subunit DabA 1 (1019 aa).

Residues C491 and D493 each contribute to the Zn(2+) site. The interval 624–643 (VPTRLHSPRDEGSAAGGEGQ) is disordered. Zn(2+) contacts are provided by H676 and C691.

This sequence belongs to the inorganic carbon transporter (TC 9.A.2) DabA family. As to quaternary structure, forms a complex with DabB. Zn(2+) serves as cofactor.

It is found in the cell inner membrane. Its function is as follows. Part of an energy-coupled inorganic carbon pump. In Sorangium cellulosum (strain So ce56) (Polyangium cellulosum (strain So ce56)), this protein is Probable inorganic carbon transporter subunit DabA 1.